We begin with the raw amino-acid sequence, 1608 residues long: DNA-directed RNA polymerase III subunit rpc2 (1608 aa).

Zn(2+) is bound by residues cysteine 1557, cysteine 1560, cysteine 1569, and cysteine 1572. Residues 1557–1572 (CKNCGFLGYEGYCQYC) form a C4-type zinc finger.

It belongs to the RNA polymerase beta chain family. In terms of assembly, component of the RNA polymerase III (Pol III) complex. Post-translationally, this protein undergoes a protein self splicing that involves a post-translational excision of the intervening region (intein) followed by peptide ligation.

The protein resides in the nucleus. The catalysed reaction is RNA(n) + a ribonucleoside 5'-triphosphate = RNA(n+1) + diphosphate. DNA-dependent RNA polymerase catalyzes the transcription of DNA into RNA using the four ribonucleoside triphosphates as substrates. Second largest core component of RNA polymerase III which synthesizes small RNAs, such as 5S rRNA and tRNAs. Proposed to contribute to the polymerase catalytic activity and forms the polymerase active center together with the largest subunit. Pol III is composed of mobile elements and rpc2 is part of the core element with the central large cleft and probably a clamp element that moves to open and close the cleft. In Dictyostelium discoideum (Social amoeba), this protein is DNA-directed RNA polymerase III subunit rpc2 (polr3b).